A 228-amino-acid chain; its full sequence is Interleukin-27 subunit beta (228 aa).

The signal sequence occupies residues 1 to 18 (MSKLLFLSLALWASRSPG). Fibronectin type-III domains are found at residues 26 to 124 (ALSQ…VAER) and 127 to 224 (KPDP…VESA). N-linked (GlcNAc...) asparagine glycosylation is found at asparagine 54 and asparagine 104.

The protein belongs to the type I cytokine receptor family. Type 3 subfamily. Heterodimer with IL27/IL27A; not disulfide-linked. This heterodimer is known as interleukin IL-27. Heterodimer with IL12A; not disulfide-linked. This heterodimer is known as interleukin IL-35. Interacts with SQSTM1.

The protein resides in the secreted. Its function is as follows. Associates with IL27 to form the IL-27 interleukin, a heterodimeric cytokine which functions in innate immunity. IL-27 has pro- and anti-inflammatory properties, that can regulate T-helper cell development, suppress T-cell proliferation, stimulate cytotoxic T-cell activity, induce isotype switching in B-cells, and that has diverse effects on innate immune cells. Among its target cells are CD4 T-helper cells which can differentiate in type 1 effector cells (TH1), type 2 effector cells (TH2) and IL17 producing helper T-cells (TH17). It drives rapid clonal expansion of naive but not memory CD4 T-cells. It also strongly synergizes with IL-12 to trigger interferon-gamma/IFN-gamma production of naive CD4 T-cells, binds to the cytokine receptor WSX-1/TCCR. Another important role of IL-27 is its antitumor activity as well as its antiangiogenic activity with activation of production of antiangiogenic chemokines. This is Interleukin-27 subunit beta (Ebi3) from Mus musculus (Mouse).